The following is a 1530-amino-acid chain: Multidrug resistance-associated protein 1 (1530 aa).

Topologically, residues 1–33 (MALRDFCSVDGSDLFWEWNVTWNTSNPDFTKCF) are extracellular. Residue asparagine 19 is glycosylated (N-linked (GlcNAc...) asparagine). The chain crosses the membrane as a helical span at residues 34–54 (QNTVLVWVPCSYLWVCFPFYF). Residues 55-74 (LYLSHHDRGYIQMTHLNKAK) lie on the Cytoplasmic side of the membrane. Residues 75 to 95 (TALGFLLWIVCWADLFYSFWE) traverse the membrane as a helical segment. At 96-100 (RSMGK) the chain is on the extracellular side. Residues 101-121 (LLAPVFLVSPTLLGITMLLAT) form a helical membrane-spanning segment. Topologically, residues 122–133 (FLIQIERRRGVQ) are cytoplasmic. A helical membrane pass occupies residues 134–154 (SSGIMLTFWLIALLCALAILR). Topologically, residues 155–172 (SKIMTALKEDARVDVFRD) are extracellular. Residues 173-193 (VTFYIYFSLVLIQLVLSCFSD) form a helical membrane-spanning segment. The Cytoplasmic portion of the chain corresponds to 194–316 (RSPLFSETIN…KERDPSLFKV (123 aa)). Residue tyrosine 277 is modified to Phosphotyrosine. The residue at position 289 (serine 289) is a Phosphoserine. The helical transmembrane segment at 317–337 (LYKTFGPYFLMSFLFKAVHDL) threads the bilayer. In terms of domain architecture, ABC transmembrane type-1 1 spans 325-608 (FLMSFLFKAV…LPMVISSIVQ (284 aa)). Residues 338 to 363 (MMFAGPEILKLLINFVNDKKAPEWQG) are Extracellular-facing. Residues 364 to 384 (YFYTALLFISACLQTLVLHQY) traverse the membrane as a helical segment. At 385–440 (FHICFVSGMRIKTAVIGAVYRKALVITNAARKSSTVGEIVNLMSVDAQRFMDLATY) the chain is on the cytoplasmic side. The chain crosses the membrane as a helical span at residues 441-461 (INMIWSAPLQVILALYLLWLN). The Extracellular portion of the chain corresponds to 462-464 (LGP). A helical transmembrane segment spans residues 465–485 (SVLAGVAVMVLMVPLNAVMAM). The Cytoplasmic segment spans residues 486–547 (KTKTYQVAHM…VLKKSAYLAA (62 aa)). Residue lysine 503 is modified to N6-succinyllysine. Residues 548–568 (VGTFTWVCTPFLVALSTFAVY) form a helical membrane-spanning segment. The Extracellular segment spans residues 569-590 (VTVDENNILDAQKAFVSLALFN). The helical transmembrane segment at 591-611 (ILRFPLNILPMVISSIVQASV) threads the bilayer. Residues 612-966 (SLKRLRVFLS…VKLSVYWDYM (355 aa)) are Cytoplasmic-facing. In terms of domain architecture, ABC transporter 1 spans 644 to 868 (ITVKNATFTW…DGAFAEFLRT (225 aa)). 678–685 (GQVGCGKS) is a binding site for ATP. The tract at residues 912-939 (RQLSSSSSYSRDVSQHHTSTAELRKPGP) is disordered. Serine 915 and serine 930 each carry phosphoserine. Residues 967–987 (KAIGLFISFLSIFLFLCNHVA) traverse the membrane as a helical segment. In terms of domain architecture, ABC transmembrane type-1 2 spans 974–1255 (SFLSIFLFLC…LVRMSSEMET (282 aa)). Over 988 to 1024 (SLVSNYWLSLWTDDPIVNGTQEHTQVRLSVYGALGIS) the chain is Extracellular. Asparagine 1005 is a glycosylation site (N-linked (GlcNAc...) asparagine). A helical membrane pass occupies residues 1025–1045 (QGITVFGYSMAVSIGGIFASR). Over 1046–1088 (RLHLDLLHNVLRSPISFFERTPSGNLVNRFSKELDTVDSMIPQ) the chain is Cytoplasmic. The helical transmembrane segment at 1089-1109 (VIKMFMGSLFNVIGACIIILL) threads the bilayer. Residue alanine 1110 is a topological domain, extracellular. Residues 1111 to 1131 (TPMAAVIIPPLGLIYFFVQRF) traverse the membrane as a helical segment. Residues 1132-1202 (YVASSRQLKR…VANRWLAVRL (71 aa)) lie on the Cytoplasmic side of the membrane. A helical membrane pass occupies residues 1203–1223 (ECVGNCIVLFASLFAVISRHS). Residues 1224–1225 (LS) are Extracellular-facing. The chain crosses the membrane as a helical span at residues 1226-1246 (AGLVGLSVSYSLQVTTYLNWL). The Cytoplasmic segment spans residues 1247-1530 (VRMSSEMETN…YSMAKDSGLV (284 aa)). The 235-residue stretch at 1292–1526 (VEFRDYGLRY…RGLFYSMAKD (235 aa)) folds into the ABC transporter 2 domain. 1326-1333 (GRTGAGKS) serves as a coordination point for ATP.

The protein belongs to the ABC transporter superfamily. ABCC family. Conjugate transporter (TC 3.A.1.208) subfamily. As to expression, expressed in heart, spleen, lung, kidney, skeletal muscle, mammary gland and weaker in brain and liver.

It localises to the cell membrane. It is found in the basolateral cell membrane. The enzyme catalyses ATP + H2O + xenobioticSide 1 = ADP + phosphate + xenobioticSide 2.. The catalysed reaction is an S-substituted glutathione(in) + ATP + H2O = an S-substituted glutathione(out) + ADP + phosphate + H(+). It carries out the reaction sphing-4-enine 1-phosphate(in) + ATP + H2O = sphing-4-enine 1-phosphate(out) + ADP + phosphate + H(+). It catalyses the reaction leukotriene C4(in) + ATP + H2O = leukotriene C4(out) + ADP + phosphate + H(+). The enzyme catalyses 17beta-estradiol 17-O-(beta-D-glucuronate)(in) + ATP + H2O = 17beta-estradiol 17-O-(beta-D-glucuronate)(out) + ADP + phosphate + H(+). The catalysed reaction is daunorubicin(in) + ATP + H2O = daunorubicin(out) + ADP + phosphate + H(+). It carries out the reaction vincristine(in) + ATP + H2O = vincristine(out) + ADP + phosphate + H(+). It catalyses the reaction 2',3'-cGAMP(in) + ATP + H2O = 2',3'-cGAMP(out) + ADP + phosphate + H(+). The enzyme catalyses S-[(2E,6E,10E)-geranylgeranyl]-L-glutathione(in) + ATP + H2O = S-[(2E,6E,10E)-geranylgeranyl]-L-glutathione(out) + ADP + phosphate + H(+). The catalysed reaction is prostaglandin A2-S-(R)-glutathione(in) + ATP + H2O = prostaglandin A2-S-(R)-glutathione(out) + ADP + phosphate + H(+). It carries out the reaction prostaglandin A2-S-(S)-glutathione(in) + ATP + H2O = prostaglandin A2-S-(S)-glutathione(out) + ADP + phosphate + H(+). With respect to regulation, MK 571 inhibits sphingosine 1-phosphate and leukotriene C4 export. In terms of biological role, mediates export of organic anions and drugs from the cytoplasm. Mediates ATP-dependent transport of glutathione and glutathione conjugates, leukotriene C4, estradiol-17-beta-o-glucuronide, methotrexate, antiviral drugs and other xenobiotics. Confers resistance to anticancer drugs by decreasing accumulation of drug in cells, and by mediating ATP- and GSH-dependent drug export. Hydrolyzes ATP with low efficiency. Catalyzes the export of sphingosine 1-phosphate from mast cells independently of their degranulation. Participates in inflammatory response by allowing export of leukotriene C4 from leukotriene C4-synthesizing cells. Mediates ATP-dependent, GSH-independent cyclic GMP-AMP (cGAMP) export. Thus, by limiting intracellular cGAMP concentrations negatively regulates the cGAS-STING pathway. Exports S-geranylgeranyl-glutathione (GGG) in lymphoid cells and stromal compartments of lymphoid organs. ABCC1 (via extracellular transport) with GGT5 (via GGG catabolism) establish GGG gradients within lymphoid tissues to position P2RY8-positive lymphocytes at germinal centers in lymphoid follicles and restrict their chemotactic transmigration from blood vessels to the bone marrow parenchyma. Mediates basolateral export of GSH-conjugated R- and S-prostaglandin A2 diastereomers in polarized epithelial cells. In Bos taurus (Bovine), this protein is Multidrug resistance-associated protein 1.